The sequence spans 938 residues: MANSMNGRNPGGRGGNPRKGRILGIIDAIQDAVGPPKQAAADRRTVEKTWKLMDKVVRLCQNPKLQLKNSPPYILDILPDTYQHLRLILSKYDDNQKLAQLSENEYFKIYIDSLMKKSKRAIRLFKEGKERMYEEQSQDRRNLTKLSLIFSHMLAEIKAIFPNGQFQGDNFRITKADAAEFWRKFFGDKTIVPWKVFRQCLHEVHQISSGLEAMALKSTIDLTCNDYISVFEFDIFTRLFQPWGSILRNWNFLAVTHPGYMAFLTYDEVKARLQKYSTKPGSYIFRLSCTRLGQWAIGYVTGDGNILQTIPHNKPLFQALIDGSREGFYLYPDGRSYNPDLTGLCEPTPHDHIKVTQEQYELYCEMGSTFQLCKICAENDKDVKIEPCGHLMCTSCLTAWQESDGQGCPFCRCEIKGTEPIIVDPFDPRDEGSRCCSIIDPFSIPMLDLDDDDDREESLMMNRLASVRKCTDRQNSPVTSPGSSPLAQRRKPQPDPLQIPHLSLPPVPPRLDLIQKGIVRSPCGSPTGSPKSSPCMVRKQDKPLPAPPPPLRDPPPPPERPPPIPPDSRLSRHFHHGESVPSRDQPMPLEAWCPRDAFGTNQVMGCRILGDGSPKPGVTANSNLNGRHSRMGSDQVLMRKHRRHDLPSEGAKVFSNGHLAPEEYDVPPRLSPPPPVTALLPSIKCTGPIANCLSEKTRDTVEEDDDEYKIPSSHPVSLNSQPSHCHNVKPPVRSCDNGHCILNGTHGTPSEMKKSNIPDLGIYLKGEDAFDALPPSLPPPPPPARHSLIEHSKPPGSSSRPSSGQDLFLLPSDPFFDPASGQVPLPPARRAPGDGVKSNRASQDYDQLPSSSDGSQAPARPPKPRPRRTAPEIHHRKPHGPEAALENVDAKIAKLMGEGYAFEEVKRALEIAQNNLEVARSILREFAFPPPVSPRLNL.

The tract at residues 35 to 167 is 4H; sequence PPKQAAADRR…KAIFPNGQFQ (133 aa). The region spanning 35 to 343 is the Cbl-PTB domain; that stretch reads PPKQAAADRR…GRSYNPDLTG (309 aa). Residues 168–240 are EF-hand-like; it reads GDNFRITKAD…FEFDIFTRLF (73 aa). 5 residues coordinate Ca(2+): Asp221, Thr223, Asn225, Tyr227, and Glu232. Residues 241–343 are SH2-like; that stretch reads QPWGSILRNW…GRSYNPDLTG (103 aa). Phosphoserine; by PKC/PRKCQ is present on Ser282. Residue Arg286 coordinates 4-O-phospho-L-tyrosine. The interval 344-372 is linker; the sequence is LCEPTPHDHIKVTQEQYELYCEMGSTFQL. Tyr363 carries the phosphotyrosine modification. The segment at 373 to 412 adopts an RING-type zinc-finger fold; the sequence is CKICAENDKDVKIEPCGHLMCTSCLTAWQESDGQGCPFCR. The segment at 465–588 is disordered; it reads ASVRKCTDRQ…SVPSRDQPMP (124 aa). A compositionally biased stretch (polar residues) spans 473 to 486; it reads RQNSPVTSPGSSPL. A phosphoserine mark is found at Ser476, Ser480, Ser484, Ser521, Ser525, and Ser529. The tract at residues 543 to 567 is interaction with VAV1; the sequence is PLPAPPPPLRDPPPPPERPPPIPPD. The segment covering 544–566 has biased composition (pro residues); sequence LPAPPPPLRDPPPPPERPPPIPP. Ser633 is modified (phosphoserine). Phosphotyrosine occurs at positions 664 and 708. Disordered stretches follow at residues 702 to 725 and 771 to 885; these read EEDD…PSHC and DALP…EAAL. The segment covering 714 to 724 has biased composition (polar residues); that stretch reads HPVSLNSQPSH. Residues 775–784 are compositionally biased toward pro residues; it reads PSLPPPPPPA. The span at 794 to 804 shows a compositional bias: low complexity; sequence PPGSSSRPSSG. A compositionally biased stretch (polar residues) spans 839 to 855; sequence NRASQDYDQLPSSSDGS. Position 845 is a phosphotyrosine (Tyr845). The interval 847-883 is interaction with SH3KBP1; it reads QLPSSSDGSQAPARPPKPRPRRTAPEIHHRKPHGPEA. A compositionally biased stretch (basic residues) spans 862-878; that stretch reads PKPRPRRTAPEIHHRKP. In terms of domain architecture, UBA spans 887-926; sequence NVDAKIAKLMGEGYAFEEVKRALEIAQNNLEVARSILREF.

Interacts with SH3 domain-containing proteins LCK, CRK and SORBS1. Interacts with LCP2 and ZAP70. Interacts with CBL. Interacts with SH3 domain-containing proteins VAV1, FYN, FGR, PLCG1, GRB2, CRKL, PIK3R1 and SH3KBP1/CIN85. Identified in heterotrimeric complexes with SH3KBP1/CIN85, CD2AP and ARHGEF7, where one CBLB peptide binds two copies of the other protein. Interacts with poly-ubiquitinated proteins. Dimerization is required for the binding of poly-ubiquitin, but not for the binding of mono-ubiquitin. Interacts with EGFR (phosphorylated). Interacts with IFT20. In terms of processing, phosphorylated on tyrosine and serine residues upon TCR or BCR activation, and upon various types of cell stimulation. Auto-ubiquitinated upon EGF-mediated cell activation or upon T-cell costimulation by CD28; which promotes proteasomal degradation.

Its subcellular location is the cytoplasm. It catalyses the reaction S-ubiquitinyl-[E2 ubiquitin-conjugating enzyme]-L-cysteine + [acceptor protein]-L-lysine = [E2 ubiquitin-conjugating enzyme]-L-cysteine + N(6)-ubiquitinyl-[acceptor protein]-L-lysine.. Its pathway is protein modification; protein ubiquitination. Its function is as follows. E3 ubiquitin-protein ligase which accepts ubiquitin from specific E2 ubiquitin-conjugating enzymes, and transfers it to substrates, generally promoting their degradation by the proteasome. Negatively regulates TCR (T-cell receptor), BCR (B-cell receptor) and FCER1 (high affinity immunoglobulin epsilon receptor) signal transduction pathways. In naive T-cells, inhibits VAV1 activation upon TCR engagement and imposes a requirement for CD28 costimulation for proliferation and IL-2 production. Also acts by promoting PIK3R1/p85 ubiquitination, which impairs its recruitment to the TCR and subsequent activation. In activated T-cells, inhibits PLCG1 activation and calcium mobilization upon restimulation and promotes anergy. In B-cells, acts by ubiquitinating SYK and promoting its proteasomal degradation. Slightly promotes SRC ubiquitination. May be involved in EGFR ubiquitination and internalization. May be functionally coupled with the E2 ubiquitin-protein ligase UB2D3. In association with CBL, required for proper feedback inhibition of ciliary platelet-derived growth factor receptor-alpha (PDGFRA) signaling pathway via ubiquitination and internalization of PDGFRA. This chain is E3 ubiquitin-protein ligase CBL-B (Cblb), found in Rattus norvegicus (Rat).